The chain runs to 193 residues: Imidazoleglycerol-phosphate dehydratase (193 aa).

It belongs to the imidazoleglycerol-phosphate dehydratase family.

The protein resides in the cytoplasm. The enzyme catalyses D-erythro-1-(imidazol-4-yl)glycerol 3-phosphate = 3-(imidazol-4-yl)-2-oxopropyl phosphate + H2O. The protein operates within amino-acid biosynthesis; L-histidine biosynthesis; L-histidine from 5-phospho-alpha-D-ribose 1-diphosphate: step 6/9. This chain is Imidazoleglycerol-phosphate dehydratase, found in Saccharolobus islandicus (strain M.14.25 / Kamchatka #1) (Sulfolobus islandicus).